The following is a 93-amino-acid chain: Co-chaperonin GroES (93 aa).

Belongs to the GroES chaperonin family. In terms of assembly, heptamer of 7 subunits arranged in a ring. Interacts with the chaperonin GroEL.

It localises to the cytoplasm. Its function is as follows. Together with the chaperonin GroEL, plays an essential role in assisting protein folding. The GroEL-GroES system forms a nano-cage that allows encapsulation of the non-native substrate proteins and provides a physical environment optimized to promote and accelerate protein folding. GroES binds to the apical surface of the GroEL ring, thereby capping the opening of the GroEL channel. This is Co-chaperonin GroES from Streptococcus gordonii.